Reading from the N-terminus, the 110-residue chain is NADH-quinone oxidoreductase subunit K (110 aa).

3 helical membrane-spanning segments follow: residues 13 to 33 (LNHY…GLFM), 41 to 61 (ILMS…AFSV), and 73 to 93 (IIIL…LLIY).

Belongs to the complex I subunit 4L family. NDH-1 is composed of 14 different subunits. Subunits NuoA, H, J, K, L, M, N constitute the membrane sector of the complex.

Its subcellular location is the cell inner membrane. It carries out the reaction a quinone + NADH + 5 H(+)(in) = a quinol + NAD(+) + 4 H(+)(out). NDH-1 shuttles electrons from NADH, via FMN and iron-sulfur (Fe-S) centers, to quinones in the respiratory chain. The immediate electron acceptor for the enzyme in this species is believed to be ubiquinone. Couples the redox reaction to proton translocation (for every two electrons transferred, four hydrogen ions are translocated across the cytoplasmic membrane), and thus conserves the redox energy in a proton gradient. This is NADH-quinone oxidoreductase subunit K from Rickettsia prowazekii (strain Madrid E).